The following is a 43-amino-acid chain: Alpha-conotoxin-like Leo-A1 (43 aa).

The propeptide occupies 1–26 (LTLDRASDDTDVAAEIMSGLIALAID). 2 cysteine pairs are disulfide-bonded: Cys28–Cys34 and Cys29–Cys42. Residues 30-32 (SDS) are lacks the Ser-Xaa-Pro motif that is crucial for potent interaction with nAChR.

It belongs to the conotoxin A superfamily. In terms of tissue distribution, expressed by the venom duct.

It localises to the secreted. Its function is as follows. Alpha-conotoxins act on postsynaptic membranes, they bind to the nicotinic acetylcholine receptors (nAChR) and thus inhibit them. Has possibly a distinct nAChR binding mode from other alpha-conotoxins, due to a different three residue motif (lacks the Ser-Xaa-Pro motif). The protein is Alpha-conotoxin-like Leo-A1 of Conus leopardus (Leopard cone).